A 195-amino-acid polypeptide reads, in one-letter code: Translation initiation factor IF-3 (195 aa).

Residues 158 to 195 form a disordered region; that stretch reads EQSEVQQRPKREGRNMIMFLSPRKTPLIKKEEDAKENN. Positions 185–195 are enriched in basic and acidic residues; it reads IKKEEDAKENN.

Belongs to the IF-3 family. As to quaternary structure, monomer.

The protein resides in the cytoplasm. In terms of biological role, IF-3 binds to the 30S ribosomal subunit and shifts the equilibrium between 70S ribosomes and their 50S and 30S subunits in favor of the free subunits, thus enhancing the availability of 30S subunits on which protein synthesis initiation begins. This Prochlorococcus marinus (strain MIT 9515) protein is Translation initiation factor IF-3.